The following is a 797-amino-acid chain: Methionine--tRNA ligase, cytoplasmic (797 aa).

The 'HIGH' region motif lies at 26–36; it reads PYVNNVPHLGN. The 'KMSKS' region signature appears at 348 to 352; it reads KFSKS. ATP is bound at residue Lys351. The interval 601–634 is disordered; that stretch reads DQLNKTKLSDAKKQKASSKGGGKPKPQPAADREI. The tRNA-binding domain occupies 635–738; the sequence is TMARLDIRVG…KTANIGERVT (104 aa).

The protein belongs to the class-I aminoacyl-tRNA synthetase family.

The protein localises to the cytoplasm. It localises to the cytosol. It carries out the reaction tRNA(Met) + L-methionine + ATP = L-methionyl-tRNA(Met) + AMP + diphosphate. The chain is Methionine--tRNA ligase, cytoplasmic from Arabidopsis thaliana (Mouse-ear cress).